The primary structure comprises 141 residues: Hemoglobin subunit alpha-D (141 aa).

The Globin domain maps to 1 to 141 (MLTAEDKKLI…VAAVLAGKYR (141 aa)). 2 residues coordinate heme b: H58 and H87.

The protein belongs to the globin family. In terms of assembly, heterotetramer of two alpha-D chains and two beta chains. In terms of tissue distribution, red blood cells.

Involved in oxygen transport from the lung to the various peripheral tissues. This chain is Hemoglobin subunit alpha-D (HBAD), found in Coturnix japonica (Japanese quail).